Here is a 382-residue protein sequence, read N- to C-terminus: Ribosomal RNA large subunit methyltransferase G (382 aa).

The protein belongs to the methyltransferase superfamily. RlmG family.

It is found in the cytoplasm. The catalysed reaction is guanosine(1835) in 23S rRNA + S-adenosyl-L-methionine = N(2)-methylguanosine(1835) in 23S rRNA + S-adenosyl-L-homocysteine + H(+). Its function is as follows. Specifically methylates the guanine in position 1835 (m2G1835) of 23S rRNA. The chain is Ribosomal RNA large subunit methyltransferase G from Psychromonas ingrahamii (strain DSM 17664 / CCUG 51855 / 37).